The chain runs to 509 residues: Transcription factor SOX-9 (509 aa).

2 disordered regions span residues 1 to 66 (MNLL…ESEE) and 160 to 271 (RLRV…IDFR). Low complexity predominate over residues 27 to 41 (SEGSRGSPCPSGSGS). A compositionally biased stretch (polar residues) spans 42–52 (DTENTRPQENT). Basic and acidic residues-rich tracts occupy residues 56 to 66 (GEPDLKKESEE) and 160 to 174 (RLRV…DYKY). Positions 63 to 103 (ESEEDKFPVCIREAVSQVLKGYDWTLVPMPVRVNGSSKNKP) are dimerization (DIM). The interval 63–103 (ESEEDKFPVCIREAVSQVLKGYDWTLVPMPVRVNGSSKNKP) is PQA. Ser64 is subject to Phosphoserine. The segment at residues 105-173 (VKRPMNAFMV…QHKKDHPDYK (69 aa)) is a DNA-binding region (HMG box). Ser211 carries the post-translational modification Phosphoserine. Residues 224–307 (PGEHSGQSQG…LPPNGHPGVP (84 aa)) form a transactivation domain (TAM) region. 2 short sequence motifs (9aaTAD) span residues 275–284 (IGELSSDVIS) and 290–298 (DVNEFDQYL). Disordered regions lie at residues 335 to 415 (WMSK…QHSP) and 420 to 439 (YSPF…TRSQ). Pro residues predominate over residues 341–359 (APPPPPHPPQQPPPVPQAP). Residues 360-369 (AQPQAALPQQ) are compositionally biased toward low complexity. The span at 380-415 (HTLTTLSSEPGQSQRTHIKTEQLSPSHYSEQQQHSP) shows a compositional bias: polar residues. Residues 394–509 (RTHIKTEQLS…QPVYTQLTRP (116 aa)) form a transactivation domain (TAC) region. A Glycyl lysine isopeptide (Lys-Gly) (interchain with G-Cter in ubiquitin) cross-link involves residue Lys398. The 9aaTAD 3 signature appears at 460-468 (SVLYSTFTY). Residues 479-509 (PIADTSGVPSIPQTHSPQHWEQPVYTQLTRP) form a disordered region. A compositionally biased stretch (polar residues) spans 485 to 509 (GVPSIPQTHSPQHWEQPVYTQLTRP).

In terms of assembly, homodimer; homodimerization is required for activity. Interacts (via C-terminus) with ZNF219; forming a complex that binds to the COL2A1 promoter and activates COL2A1 expression. Interacts with DDRGK1. Interacts with EP300/p300. Interacts with beta-catenin (CTNNB1); inhibiting CTNNB1 activity by competing with the binding sites of TCF/LEF within CTNNB1. Acetylated; acetylation impairs nuclear localization and ability to transactivate expression of target genes. Deacetylated by SIRT1. In terms of processing, phosphorylation at Ser-64 and Ser-211 by PKA increases transcriptional activity and may help delay chondrocyte maturation downstream of PTHLH/PTHrP signaling. Phosphorylation at either Ser-64 or Ser-211 is required for sumoylation, but phosphorylation is not dependent on sumoylation. Phosphorylated on tyrosine residues; tyrosine dephosphorylation by PTPN11/SHP2 blocks SOX9 phosphorylation by PKA and subsequent SUMOylation. Post-translationally, sumoylated; phosphorylation at either Ser-64 or Ser-211 is required for sumoylation. Sumoylation is induced by BMP signaling pathway. Ubiquitinated; ubiquitination leads to proteasomal degradation and is negatively regulated by DDRGK1.

The protein localises to the nucleus. Transcription factor that plays a key role in chondrocytes differentiation and skeletal development. Specifically binds the 5'-ACAAAG-3' DNA motif present in enhancers and super-enhancers and promotes expression of genes important for chondrogenesis, including cartilage matrix protein-coding genes COL2A1, COL4A2, COL9A1, COL11A2 and ACAN, SOX5 and SOX6. Also binds to some promoter regions. Plays a central role in successive steps of chondrocyte differentiation. Absolutely required for precartilaginous condensation, the first step in chondrogenesis during which skeletal progenitors differentiate into prechondrocytes. Together with SOX5 and SOX6, required for overt chondrogenesis when condensed prechondrocytes differentiate into early stage chondrocytes, the second step in chondrogenesis. Later, required to direct hypertrophic maturation and block osteoblast differentiation of growth plate chondrocytes: maintains chondrocyte columnar proliferation, delays prehypertrophy and then prevents osteoblastic differentiation of chondrocytes by lowering beta-catenin (CTNNB1) signaling and RUNX2 expression. Also required for chondrocyte hypertrophy, both indirectly, by keeping the lineage fate of chondrocytes, and directly, by remaining present in upper hypertrophic cells and transactivating COL10A1 along with MEF2C. Low lipid levels are the main nutritional determinant for chondrogenic commitment of skeletal progenitor cells: when lipids levels are low, FOXO (FOXO1 and FOXO3) transcription factors promote expression of SOX9, which induces chondrogenic commitment and suppresses fatty acid oxidation. Mechanistically, helps, but is not required, to remove epigenetic signatures of transcriptional repression and deposit active promoter and enhancer marks at chondrocyte-specific genes. Acts in cooperation with the Hedgehog pathway-dependent GLI (GLI1 and GLI3) transcription factors. In addition to cartilage development, also acts as a regulator of proliferation and differentiation in epithelial stem/progenitor cells: involved in the lung epithelium during branching morphogenesis, by balancing proliferation and differentiation and regulating the extracellular matrix. Controls epithelial branching during kidney development. This Sus scrofa (Pig) protein is Transcription factor SOX-9 (SOX9).